The chain runs to 208 residues: Large ribosomal subunit protein uL4 (208 aa).

The disordered stretch occupies residues 45-89 (RQGTHAHKNRSAVSGGGKKPWRQKGTGRARQGSTRSPQWRGGGTV).

This sequence belongs to the universal ribosomal protein uL4 family. Part of the 50S ribosomal subunit.

One of the primary rRNA binding proteins, this protein initially binds near the 5'-end of the 23S rRNA. It is important during the early stages of 50S assembly. It makes multiple contacts with different domains of the 23S rRNA in the assembled 50S subunit and ribosome. Functionally, forms part of the polypeptide exit tunnel. In Lactococcus lactis subsp. lactis (strain IL1403) (Streptococcus lactis), this protein is Large ribosomal subunit protein uL4.